The following is a 732-amino-acid chain: Coagulation factor XIII A chain (732 aa).

Residues 1–27 (MSETSRTAFGGRRAVPPNNSNAAEDDL) are disordered. At Ser2 the chain carries N-acetylserine. Residues 2–38 (SETSRTAFGGRRAVPPNNSNAAEDDLPTVELQGVVPR) constitute a propeptide, activation peptide. Catalysis depends on residues Cys315, His374, and Asp397. Residues Asn437, Asp439, Glu486, and Glu491 each contribute to the Ca(2+) site. Asn614 is a glycosylation site (N-linked (GlcNAc...) asparagine).

This sequence belongs to the transglutaminase superfamily. Transglutaminase family. Tetramer of two A chains (F13A1) and two B (F13B) chains. Ca(2+) serves as cofactor. The activation peptide is released by thrombin.

It is found in the cytoplasm. The protein resides in the secreted. The catalysed reaction is L-glutaminyl-[protein] + L-lysyl-[protein] = [protein]-L-lysyl-N(6)-5-L-glutamyl-[protein] + NH4(+). In terms of biological role, factor XIII is activated by thrombin and calcium ion to a transglutaminase that catalyzes the formation of gamma-glutamyl-epsilon-lysine cross-links between fibrin chains, thus stabilizing the fibrin clot. Also cross-link alpha-2-plasmin inhibitor, or fibronectin, to the alpha chains of fibrin. This chain is Coagulation factor XIII A chain (F13A1), found in Homo sapiens (Human).